We begin with the raw amino-acid sequence, 56 residues long: Conotoxin Cal6.41c (56 aa).

Positions 1-23 are cleaved as a signal peptide; that stretch reads MSGSGAMLLGLLILVAMATSLDT. Disulfide bonds link C27–C41, C33–C50, and C40–C54.

In terms of tissue distribution, expressed by the venom duct.

Its subcellular location is the secreted. Its function is as follows. Probable neurotoxin. This is Conotoxin Cal6.41c from Californiconus californicus (California cone).